Here is a 323-residue protein sequence, read N- to C-terminus: Elongation factor P--(R)-beta-lysine ligase (323 aa).

76–78 (SPE) provides a ligand contact to substrate. Residues 100–102 (RNE) and asparagine 109 each bind ATP. Tyrosine 118 provides a ligand contact to substrate. 242 to 243 (EL) provides a ligand contact to ATP. Residue glutamate 249 participates in substrate binding. Glycine 298 provides a ligand contact to ATP.

Belongs to the class-II aminoacyl-tRNA synthetase family. EpmA subfamily. In terms of assembly, homodimer.

It carries out the reaction D-beta-lysine + L-lysyl-[protein] + ATP = N(6)-((3R)-3,6-diaminohexanoyl)-L-lysyl-[protein] + AMP + diphosphate + H(+). With EpmB is involved in the beta-lysylation step of the post-translational modification of translation elongation factor P (EF-P). Catalyzes the ATP-dependent activation of (R)-beta-lysine produced by EpmB, forming a lysyl-adenylate, from which the beta-lysyl moiety is then transferred to the epsilon-amino group of a conserved specific lysine residue in EF-P. The protein is Elongation factor P--(R)-beta-lysine ligase of Histophilus somni (strain 129Pt) (Haemophilus somnus).